Here is a 231-residue protein sequence, read N- to C-terminus: Cytidylate kinase (231 aa).

18–26 (GPSGTGKSS) lines the ATP pocket.

This sequence belongs to the cytidylate kinase family. Type 1 subfamily.

Its subcellular location is the cytoplasm. The catalysed reaction is CMP + ATP = CDP + ADP. The enzyme catalyses dCMP + ATP = dCDP + ADP. The protein is Cytidylate kinase of Streptomyces coelicolor (strain ATCC BAA-471 / A3(2) / M145).